The primary structure comprises 574 residues: Septation ring formation regulator EzrA (574 aa).

Residues 1–7 (MSSGIIL) lie on the Extracellular side of the membrane. Residues 8–26 (LIVAIVLLVIIAYLVGVII) traverse the membrane as a helical segment. The Cytoplasmic portion of the chain corresponds to 27–574 (RKRNDSLITS…YEKTREHIRF (548 aa)). 3 coiled-coil regions span residues 102-141 (NFIR…EEKN), 274-350 (ELVT…ETES), and 459-520 (QLEA…SFEA).

The protein belongs to the EzrA family.

It is found in the cell membrane. Negative regulator of FtsZ ring formation; modulates the frequency and position of FtsZ ring formation. Inhibits FtsZ ring formation at polar sites. Interacts either with FtsZ or with one of its binding partners to promote depolymerization. This chain is Septation ring formation regulator EzrA, found in Streptococcus pyogenes serotype M6 (strain ATCC BAA-946 / MGAS10394).